We begin with the raw amino-acid sequence, 819 residues long: Zinc finger protein with KRAB and SCAN domains 5 (819 aa).

Positions 51–132 (QRFKHFQYHE…AVIESIQREL (82 aa)) constitute an SCAN box domain. Glycyl lysine isopeptide (Lys-Gly) (interchain with G-Cter in SUMO2) cross-links involve residues lysine 214, lysine 246, and lysine 302. In terms of domain architecture, KRAB spans 216–287 (EDVADVAVSF…HWVAAERTEK (72 aa)). Disordered stretches follow at residues 236–263 (SQKSLGRDSRKEDCESTTPVDYEPKEGN) and 283–340 (ERTE…GERG). The segment covering 240–249 (LGRDSRKEDC) has biased composition (basic and acidic residues). Basic and acidic residues predominate over residues 329–340 (VNRKQKSNGERG). 9 consecutive C2H2-type zinc fingers follow at residues 341-363 (HRCGDCGKFFLQASNFIQHRRIH), 369-391 (FKCGECGKSYNQRVHLTQHQRVH), 397-419 (YKCQVCGKAFRVSSHLVQHHSVH), 425-447 (YGCNECGKSFGRHSHLIEHLKRH), 540-562 (HQCNECGKSFIQSAHLIQHRRIH), 568-590 (FRCEECGKSYNQRVHLTQHHRVH), 596-618 (YACHLCGKAFRVRSHLVQHQSVH), 624-646 (FKCNECGKGFGRRSHLAGHLRLH), and 652-674 (HQCHECGEIFFQYVSLLEHQVLH). Lysine 700 is covalently cross-linked (Glycyl lysine isopeptide (Lys-Gly) (interchain with G-Cter in SUMO2)). 3 C2H2-type zinc fingers span residues 708–730 (YQCDSCGKAFSYSSDLIQHYRTH), 764–786 (HQCNECGRGFSLKSHLSQHQRIH), and 792–814 (LQCKECGMSFSWSCSLFKHLRSH). Lysine 776 is covalently cross-linked (Glycyl lysine isopeptide (Lys-Gly) (interchain with G-Cter in SUMO2)).

The protein belongs to the krueppel C2H2-type zinc-finger protein family. In terms of tissue distribution, testis specific.

The protein localises to the nucleus. Functionally, may be involved in transcriptional regulation. The sequence is that of Zinc finger protein with KRAB and SCAN domains 5 (Zkscan5) from Mus musculus (Mouse).